A 242-amino-acid polypeptide reads, in one-letter code: Carboxy-S-adenosyl-L-methionine synthase (242 aa).

Residues tyrosine 39, 64–66 (GCS), 89–90 (DN), 117–118 (DI), asparagine 132, and arginine 199 contribute to the S-adenosyl-L-methionine site.

It belongs to the class I-like SAM-binding methyltransferase superfamily. Cx-SAM synthase family. Homodimer.

It catalyses the reaction prephenate + S-adenosyl-L-methionine = carboxy-S-adenosyl-L-methionine + 3-phenylpyruvate + H2O. Catalyzes the conversion of S-adenosyl-L-methionine (SAM) to carboxy-S-adenosyl-L-methionine (Cx-SAM). The polypeptide is Carboxy-S-adenosyl-L-methionine synthase (Aliivibrio fischeri (strain MJ11) (Vibrio fischeri)).